Here is a 123-residue protein sequence, read N- to C-terminus: Small ribosomal subunit protein uS12 (123 aa).

Residue Asp89 is modified to 3-methylthioaspartic acid.

It belongs to the universal ribosomal protein uS12 family. In terms of assembly, part of the 30S ribosomal subunit. Contacts proteins S8 and S17. May interact with IF1 in the 30S initiation complex.

Its function is as follows. With S4 and S5 plays an important role in translational accuracy. Interacts with and stabilizes bases of the 16S rRNA that are involved in tRNA selection in the A site and with the mRNA backbone. Located at the interface of the 30S and 50S subunits, it traverses the body of the 30S subunit contacting proteins on the other side and probably holding the rRNA structure together. The combined cluster of proteins S8, S12 and S17 appears to hold together the shoulder and platform of the 30S subunit. This chain is Small ribosomal subunit protein uS12, found in Acidiphilium cryptum (strain JF-5).